Here is a 249-residue protein sequence, read N- to C-terminus: Protein YIPF4 (249 aa).

The segment covering 1–15 (MQPPGPQQPPPPPLF) has biased composition (pro residues). Residues 1–40 (MQPPGPQQPPPPPLFTPNNGDFTFVSSADAEDPSGSITTP) are disordered. Residues 1–116 (MQPPGPQQPP…LGFNRQVVRD (116 aa)) lie on the Cytoplasmic side of the membrane. Polar residues predominate over residues 16–26 (TPNNGDFTFVS). Residues 117–137 (NPDFWGPLAVVLFFSMISLYG) traverse the membrane as a helical segment. Residue glutamine 138 is a topological domain, lumenal. A helical membrane pass occupies residues 139–159 (FKVVSWIITIWIFGSLTIFLL). The Cytoplasmic segment spans residues 160–171 (ARVLGGEVAYGQ). Residues 172-192 (VLGVIGYSLLPLIVIAPVLLV) form a helical membrane-spanning segment. At 193–200 (VGSFEVVS) the chain is on the lumenal side. The chain crosses the membrane as a helical span at residues 201–221 (TLIKLFGVFWAAYSAASLLVG). Topologically, residues 222–228 (EEFKTKK) are cytoplasmic. The helical transmembrane segment at 229 to 249 (PLLIYPIFLLYIYFLSLYTGV) threads the bilayer.

Belongs to the YIP1 family.

It localises to the golgi apparatus. It is found in the cis-Golgi network membrane. Involved in the maintenance of the Golgi structure. The sequence is that of Protein YIPF4 (YIPF4) from Gallus gallus (Chicken).